Here is a 275-residue protein sequence, read N- to C-terminus: Bis(5'-nucleosyl)-tetraphosphatase, symmetrical (275 aa).

Belongs to the Ap4A hydrolase family.

It catalyses the reaction P(1),P(4)-bis(5'-adenosyl) tetraphosphate + H2O = 2 ADP + 2 H(+). Functionally, hydrolyzes diadenosine 5',5'''-P1,P4-tetraphosphate to yield ADP. The chain is Bis(5'-nucleosyl)-tetraphosphatase, symmetrical (apaH) from Haemophilus influenzae (strain ATCC 51907 / DSM 11121 / KW20 / Rd).